A 234-amino-acid polypeptide reads, in one-letter code: L-cystine transport system permease protein TcyB (234 aa).

5 helical membrane-spanning segments follow: residues 8 to 28, 36 to 56, 78 to 98, 100 to 120, and 199 to 219; these read ALTLGTAIPWDLVQQSFWPIL, IPLTILSFIFGMILALITALA, TPLLVQLFIIFYLFPAFNVTL, PFPSAVIAFSLNVGAYASEII, and ILVIYIEAAFIYWIICFLLSL. In terms of domain architecture, ABC transmembrane type-1 spans 32–221; the sequence is IYYTIPLTIL…IICFLLSLVQ (190 aa).

This sequence belongs to the binding-protein-dependent transport system permease family. In terms of assembly, the complex is composed of two ATP-binding proteins (TcyC), two transmembrane proteins (TcyB) and a solute-binding protein (TcyA).

Its subcellular location is the cell membrane. Part of the ABC transporter complex TcyABC involved in L-cystine import. Probably responsible for the translocation of the substrate across the membrane. This is L-cystine transport system permease protein TcyB (tcyB) from Bacillus subtilis (strain 168).